A 374-amino-acid polypeptide reads, in one-letter code: F-box/LRR-repeat protein 8 (374 aa).

One can recognise an F-box domain in the interval 2 to 48; sequence AEPGEQLPEEVLALIFRHLPLPDRAAAARVCRAWAAAATCSAVWHDT.

In terms of assembly, directly interacts with SKP1 and CUL1.

In terms of biological role, substrate-recognition component of the SCF (SKP1-CUL1-F-box protein)-type E3 ubiquitin ligase complex. The protein is F-box/LRR-repeat protein 8 (FBXL8) of Bos taurus (Bovine).